The sequence spans 594 residues: Adenine deaminase 1 (594 aa).

The protein belongs to the metallo-dependent hydrolases superfamily. Adenine deaminase family. Mn(2+) is required as a cofactor.

It catalyses the reaction adenine + H2O + H(+) = hypoxanthine + NH4(+). The chain is Adenine deaminase 1 from Desulfotalea psychrophila (strain LSv54 / DSM 12343).